A 69-amino-acid chain; its full sequence is uncharacterized protein (69 aa).

At M1–K15 the chain is on the cytoplasmic side. A helical membrane pass occupies residues L16–Y36. Residues M37–Y69 are Extracellular-facing. An N-linked (GlcNAc...) asparagine; by host glycan is attached at N51.

The protein belongs to the asfivirus X69R family.

It is found in the host membrane. This is an uncharacterized protein from Ornithodoros (relapsing fever ticks).